Consider the following 757-residue polypeptide: RNA-directed RNA polymerase catalytic subunit (757 aa).

The segment at 50–82 (SEKGKWTTNTETGAPQLNPIDGPLPEDNEPSGY) is disordered. A compositionally biased stretch (polar residues) spans 55 to 64 (WTTNTETGAP). 2 short sequence motifs (nuclear localization signal) span residues 187-195 (RKRRVRDNM) and 203-216 (RTIG…NKRS). Positions 249-256 (RGFVYFVE) are promoter-binding site. The RdRp catalytic domain occupies 286 to 483 (VRKMMTNSQD…GINMSKKKSY (198 aa)).

The protein belongs to the influenza viruses polymerase PB1 family. As to quaternary structure, influenza RNA polymerase is composed of three subunits: PB1, PB2 and PA. Interacts (via N-terminus) with PA (via C-terminus). Interacts (via C-terminus) with PB2 (via N-terminus); this interaction is essential for transcription initiation. Post-translationally, phosphorylated by host PRKCA.

The protein localises to the host nucleus. It is found in the host cytoplasm. The enzyme catalyses RNA(n) + a ribonucleoside 5'-triphosphate = RNA(n+1) + diphosphate. Its function is as follows. RNA-dependent RNA polymerase which is responsible for replication and transcription of virus RNA segments. The transcription of viral mRNAs occurs by a unique mechanism called cap-snatching. 5' methylated caps of cellular mRNAs are cleaved after 10-13 nucleotides by PA. In turn, these short capped RNAs are used as primers by PB1 for transcription of viral mRNAs. During virus replication, PB1 initiates RNA synthesis and copy vRNA into complementary RNA (cRNA) which in turn serves as a template for the production of more vRNAs. This Influenza A virus (strain A/Turkey/Minnesota/501/1978 H6N8) protein is RNA-directed RNA polymerase catalytic subunit.